A 1188-amino-acid chain; its full sequence is MENLPFPLKLLSASSLNTPSSTPWVLDIFLTLVFALGLFFLLLPYFSYLRCDNPPSPSPRKRKRHLVSQRHLVSQCPTGRRGRPRGRMKNHSLRACRECPRGLEETWDLLSQLQSLLGPHLEKGDFGQLSGPDPPGEVGKRTPDGASRSSHEPMEDAAPIVSPLASPDPRTKHPQDLASTPPPGPMTTSVSSLSASQPPEPSLLLERPSPEPPALFPHPPHTPDPLACSPPPPKGFTPPPLRDSTLLTPSHCDSVALPLDTVPQSLSPREDLAASVPAISGLGGSNSQVSALSWSQETTKTWCIFNSSVQQDHLSRQRDTTMSPLLFQAQPLSHLGPESQPFISSTPQFRPTPMAQAEAQAHLQSSFPVLSPAFLSPMKNTGVACPASQNKVQALSLPETQHPERPLLRKQLEGGLALPSRVQKSQDVFSVSTPNLPQERLTSILPENFPVSPELWRQLEQYMGQRGRIQESLDLMQLQDELPGTSQAKGKPRPWQSSTSTGESSKEAQTVKFQLERDPCPHLGQILGETPQNLSRGMESFPGKVLGATSEESERNLRKPLRSDSGSDLLRRTERNHIENILKAHMGRKLGQTNEGLIPVSVRRSWLAVNQAFPVSNTHVKTSNLAAPKSRKACVNTAQVLSFLELCTQQVLEAHIVRFWAKHRWGLPLRVLKPIQCFQLEKVSSLSLIQLAGPSSDTCESGAGSKVEVATLLGEPPMASLRKQVLTKPSVHMPERLQASSPACKQFQRAPRGIPSSNDHGSLKAPTAGQEGRWPSKPLTYSLKGSTQQSRSLGAQSSRAGETREAVPQPTVPLGTCMRANLQATSEDVRGFKAPGASKSSLLPRMSVSQDPRKLCLMEEAVSEFEPGMATKSETQPQVSAAVVLLPDGQASVVPHASENLASQVPQGHLQSTPTGNMQASQELCDLMSARRSNMGHKEPRNPNCQGSCKSQSPMFPPTHKRENSRKPNLEKHEEMFQGLRTPQLTPGRKTEDTRQNEGVQLLPSKKQPPSISHFGENIKQFFETIFSKKERKPAPVTAESQKTVKNRSCVYGSSAEAERLMTAVGQIPEENMSLCHARHASKVNQQRQQFQAPVCGFPCNHRHPFYSDHSRMLSYAASSQQATLKNQSRPNRDRQIRDQQPLKSVRCNNEQWGLRHPQLLLPKKAVSPVSPPQHRPKTPSASSHHHH.

The helical transmembrane segment at 23–43 (PWVLDIFLTLVFALGLFFLLL) threads the bilayer. 8 disordered regions span residues 57-92 (PSPR…KNHS), 121-249 (LEKG…LLTP), 483-510 (PGTS…EAQT), 530-567 (TPQN…DSGS), 733-813 (MPER…PTVP), 934-1013 (NMGH…PSIS), 1121-1143 (QQAT…QQPL), and 1155-1188 (LRHP…HHHH). Composition is skewed to basic residues over residues 59-68 (PRKRKRHLVS) and 80-92 (RRGR…KNHS). Basic and acidic residues predominate over residues 138 to 154 (VGKRTPDGASRSSHEPM). Residues 191 to 207 (SSLSASQPPEPSLLLER) show a composition bias toward low complexity. Over residues 210–241 (PEPPALFPHPPHTPDPLACSPPPPKGFTPPPL) the composition is skewed to pro residues. The span at 495–510 (WQSSTSTGESSKEAQT) shows a compositional bias: polar residues. Composition is skewed to polar residues over residues 783-800 (LKGS…SSRA) and 943-954 (PNCQGSCKSQSP). Residues 960 to 976 (HKRENSRKPNLEKHEEM) show a composition bias toward basic and acidic residues. Residues 1121–1130 (QQATLKNQSR) show a composition bias toward polar residues.

Belongs to the SPATA31 family.

The protein resides in the membrane. Functionally, may play a role in spermatogenesis. In Homo sapiens (Human), this protein is Spermatogenesis-associated protein 31C1 (SPATA31C1).